Consider the following 122-residue polypeptide: Large ribosomal subunit protein uL14 (122 aa).

Belongs to the universal ribosomal protein uL14 family. Part of the 50S ribosomal subunit. Forms a cluster with proteins L3 and L19. In the 70S ribosome, L14 and L19 interact and together make contacts with the 16S rRNA in bridges B5 and B8.

In terms of biological role, binds to 23S rRNA. Forms part of two intersubunit bridges in the 70S ribosome. This Shewanella amazonensis (strain ATCC BAA-1098 / SB2B) protein is Large ribosomal subunit protein uL14.